The following is a 274-amino-acid chain: RsbT co-antagonist protein RsbRA (274 aa).

The STAS domain maps to 150 to 265 (SAPLIPVFEN…KGIQTALEMT (116 aa)). 2 positions are modified to phosphothreonine: threonine 171 and threonine 205.

In terms of assembly, interacts with RsbRB and RsbS in the stressosome. The stressosome probably also contains RsbRC and RsbRD. Post-translationally, phosphorylated by RsbT. This threonine phosphorylation abrogates the ability of RsbRA to stimulate RsbT in vitro.

Functionally, acts as a positive regulator of sigma-B activity in response to salt and heat stress by stimulating the activity of the RsbT kinase toward RsbS in vitro. In terms of biological role, one of 4 functionally non-identical RsbR paralogs, it functions in the environmental signaling branch of the general stress response. Negative regulator of sigma-B activity. Non-phosphorylated RsbS binds to RsbT, preventing its association with RsbU. Requires any one of RsbRA, RsbRB, RsbRC or RsbRD to sequester RsbT. When RsbS and the RsbR paralog(s) are phosphorylated, they release RsbT, which can then bind and activate RsbU. This is RsbT co-antagonist protein RsbRA (rsbRA) from Bacillus subtilis (strain 168).